Reading from the N-terminus, the 277-residue chain is MPSDRRVALVTGANKGVGFAITRALCRLFSGDVLLTAQDEAQGQAAVQQLQAEGLSPRFHQLDITDLQSIRALRDFLRRAYGGLNVLVNNAVIAFKMEDTTPFHIQAEVTMKTNFDGTRDVCTELLPLMRPGGRVVNVSSMTCLRALKSCSPELQQKFRSETITEEELVGLMKKFVEDTKKGVHQTEGWPDTAYGVTKMGVTVLSRIQARHLSEHRGGDKILVNACCPGWVRTDMGGPNATKSPEEGAETPVYLALLPPDAEGPHGQFVMDKKVEQW.

NADP(+)-binding positions include V10–L34, D63–I64, and N90. S30 carries the post-translational modification Phosphoserine. Glutathione contacts are provided by residues F95–M97 and Q106. S140 contributes to the substrate binding site. A193–Y194 contacts glutathione. The active-site Proton acceptor is the Y194. Residues Y194–K198 and V231–T233 each bind NADP(+).

The protein belongs to the short-chain dehydrogenases/reductases (SDR) family. In terms of assembly, monomer. Present in liver and kidney.

It localises to the cytoplasm. The catalysed reaction is a secondary alcohol + NADP(+) = a ketone + NADPH + H(+). It carries out the reaction prostaglandin F2alpha + NADP(+) = prostaglandin E2 + NADPH + H(+). It catalyses the reaction prostaglandin E1 + NADP(+) = 15-oxoprostaglandin E1 + NADPH + H(+). The enzyme catalyses menadione + NADPH + H(+) = menadiol + NADP(+). The catalysed reaction is prostaglandin D2 + NADP(+) = 15-oxoprostaglandin D2 + NADPH + H(+). It carries out the reaction prostaglandin E2 + NADP(+) = 15-oxoprostaglandin E2 + NADPH + H(+). It catalyses the reaction prostaglandin F2alpha + NADP(+) = 15-oxoprostaglandin F2alpha + NADPH + H(+). The enzyme catalyses daunorubicin + NADPH + H(+) = 13-dihydrodaunorubicin + NADP(+). The catalysed reaction is S-nitrosoglutathione + NADPH + H(+) = S-(hydroxysulfenamide)glutathione + NADP(+). It carries out the reaction a primary alcohol + NADP(+) = an aldehyde + NADPH + H(+). It catalyses the reaction cortisol + NADPH + H(+) = 20beta-dihydrocortisol + NADP(+). The enzyme catalyses corticosterone + NADPH + H(+) = 20beta-dihydrocorticosterone + NADP(+). Functionally, NADPH-dependent reductase with broad substrate specificity. Catalyzes the reduction of a wide variety of carbonyl compounds including quinones, prostaglandins, menadione, plus various xenobiotics. Catalyzes the reduction of the antitumor anthracyclines doxorubicin and daunorubicin to the cardiotoxic compounds doxorubicinol and daunorubicinol. Can convert prostaglandin E to prostaglandin F2-alpha. Can bind glutathione, which explains its higher affinity for glutathione-conjugated substrates. Catalyzes the reduction of S-nitrosoglutathione. In addition, participates in the glucocorticoid metabolism by catalyzing the NADPH-dependent cortisol/corticosterone into 20beta-dihydrocortisol (20b-DHF) or 20beta-corticosterone (20b-DHB), which are weak agonists of NR3C1 and NR3C2 in adipose tissue. The protein is Carbonyl reductase [NADPH] 1 of Oryctolagus cuniculus (Rabbit).